The following is a 200-amino-acid chain: MSNEEIKNKDEQLQQDAVETEAEVVGTDADIDWNQAADEIDEKEAKIAQLEAALLVSEERVKEQQDSVLRARAEVENMRRRSEQEVDKARKFALSRFAEELLPVIDNLERAIQAADGEVEAIKPLLEGVELTHKTFVDTIAKFGLKEINPHGEVFNPEFHQAMSIQESAEHEPNTVMFVMQKGYELNGRVLRPAMVMVSK.

Over residues 1–12 (MSNEEIKNKDEQ) the composition is skewed to basic and acidic residues. The disordered stretch occupies residues 1–30 (MSNEEIKNKDEQLQQDAVETEAEVVGTDAD).

Belongs to the GrpE family. As to quaternary structure, homodimer.

Its subcellular location is the cytoplasm. Its function is as follows. Participates actively in the response to hyperosmotic and heat shock by preventing the aggregation of stress-denatured proteins, in association with DnaK and GrpE. It is the nucleotide exchange factor for DnaK and may function as a thermosensor. Unfolded proteins bind initially to DnaJ; upon interaction with the DnaJ-bound protein, DnaK hydrolyzes its bound ATP, resulting in the formation of a stable complex. GrpE releases ADP from DnaK; ATP binding to DnaK triggers the release of the substrate protein, thus completing the reaction cycle. Several rounds of ATP-dependent interactions between DnaJ, DnaK and GrpE are required for fully efficient folding. This Vibrio cholerae serotype O1 (strain ATCC 39315 / El Tor Inaba N16961) protein is Protein GrpE.